The primary structure comprises 222 residues: Charged multivesicular body protein 4b (222 aa).

Disordered regions lie at residues 1 to 21 (MSLI…PSPQ) and 183 to 222 (GPET…WATA). Residues 21–182 (QEAIQKLRDT…ELDKNLLEVQ (162 aa)) are a coiled coil. Residues 188–200 (PLPNVPAAVLPAK) are compositionally biased toward low complexity.

Belongs to the SNF7 family. As to quaternary structure, probable core component of the endosomal sorting required for transport complex III (ESCRT-III). ESCRT-III components are thought to multimerize to form a flat lattice on the perimeter membrane of the endosome.

It is found in the cytoplasm. The protein resides in the cytosol. The protein localises to the late endosome membrane. Its subcellular location is the midbody. In terms of biological role, probable core component of the endosomal sorting required for transport complex III (ESCRT-III) which is involved in multivesicular bodies (MVBs) formation and sorting of endosomal cargo proteins into MVBs. MVBs contain intraluminal vesicles (ILVs) that are generated by invagination and scission from the limiting membrane of the endosome and mostly are delivered to lysosomes enabling degradation of membrane proteins, such as stimulated growth factor receptors, lysosomal enzymes and lipids. The chain is Charged multivesicular body protein 4b (chmp4b) from Xenopus tropicalis (Western clawed frog).